Reading from the N-terminus, the 219-residue chain is Guanylate kinase (219 aa).

Positions 15–194 (GLMFVLSSPS…AFAEVQSILK (180 aa)) constitute a Guanylate kinase-like domain. 22–29 (SPSGAGKT) contacts ATP.

The protein belongs to the guanylate kinase family.

It localises to the cytoplasm. The enzyme catalyses GMP + ATP = GDP + ADP. Essential for recycling GMP and indirectly, cGMP. The protein is Guanylate kinase of Bradyrhizobium diazoefficiens (strain JCM 10833 / BCRC 13528 / IAM 13628 / NBRC 14792 / USDA 110).